Consider the following 549-residue polypeptide: Probable chaperonin-like protein PrmG (549 aa).

Belongs to the chaperonin (HSP60) family.

Its function is as follows. Probably plays an essential role in the productive folding of PrmA, and thus in the formation of the active PrmABCD complex. In Rhodococcus jostii (strain RHA1), this protein is Probable chaperonin-like protein PrmG (prmG).